The primary structure comprises 456 residues: Serine/threonine-protein kinase PBS1 (456 aa).

The interval 1 to 57 (MGCFSCFDSSDDEKLNPVDESNHGQKKQSQPTVSNNISGLPSGGEKLSSKTNGGSKR) is disordered. The N-myristoyl glycine moiety is linked to residue G2. S-palmitoyl cysteine attachment occurs at residues C3 and C6. Basic and acidic residues predominate over residues 12-23 (DEKLNPVDESNH). S21 is subject to Phosphoserine. The span at 27–39 (KQSQPTVSNNISG) shows a compositional bias: polar residues. One can recognise a Protein kinase domain in the interval 86-363 (FHPDTFLGEG…ADVVTALSYL (278 aa)). ATP is bound by residues 92 to 100 (LGEGGFGRV) and K115. Phosphotyrosine is present on Y160. D213 (proton acceptor) is an active-site residue. 2 positions are modified to phosphoserine: S217 and S247. Phosphothreonine occurs at positions 248 and 253. At Y261 the chain carries Phosphotyrosine. Residues 292–296 (SEMPH) carry the Recognition motif required for RPS5-mediated plant resistance to P.syringae motif. Residues 368 to 456 (YDPSKDDSRR…QGTSESNSTG (89 aa)) are disordered. 2 stretches are compositionally biased toward basic and acidic residues: residues 370–392 (PSKD…RNDD) and 400–429 (FDLE…RAVA). The span at 446–456 (EQGTSESNSTG) shows a compositional bias: polar residues.

This sequence belongs to the protein kinase superfamily. Ser/Thr protein kinase family. In infected plant cells, it interacts with the P.syringae virulence protein avrPphB. In uninfected plants, autophosphorylated form interacts with RPS5. Interacts with FLS2. Cleaved by avrPphB in infected plant cells. Its cleavage serves as a signal that triggers the RPS5-mediated defense system. In terms of processing, autophosphorylates. Autophosphorylation may be required to trigger the RPS5-mediated plant defense system. Post-translationally, palmitoylation at Cys-3 and Cys-6 are required for plasma membrane location that is essential for the RPS5-mediated plant defense response.

The protein resides in the cell membrane. It catalyses the reaction L-seryl-[protein] + ATP = O-phospho-L-seryl-[protein] + ADP + H(+). It carries out the reaction L-threonyl-[protein] + ATP = O-phospho-L-threonyl-[protein] + ADP + H(+). Functionally, protein kinase required for plant defense mechanism mediated by the disease resistance (R) protein RPS5. In case of infection by Pseudomonas syringae, AvrPphB triggers RPS5-mediated defense mechanism via the cleavage of PBS1. Both kinase activity and cleavage by avrPphB are independently required to trigger the RPS5-mediated resistance. Contributes to PAMP-triggered immunity (PTI) signaling and defense responses downstream of FLS2. This Arabidopsis thaliana (Mouse-ear cress) protein is Serine/threonine-protein kinase PBS1.